A 360-amino-acid polypeptide reads, in one-letter code: Phospho-N-acetylmuramoyl-pentapeptide-transferase (360 aa).

The next 10 helical transmembrane spans lie at R25–I45, T73–L93, Y97–Y117, V142–I162, A168–S188, G199–S219, A236–F256, V263–I283, I288–V308, and V338–K358.

The protein belongs to the glycosyltransferase 4 family. MraY subfamily. Requires Mg(2+) as cofactor.

The protein localises to the cell inner membrane. The enzyme catalyses UDP-N-acetyl-alpha-D-muramoyl-L-alanyl-gamma-D-glutamyl-meso-2,6-diaminopimeloyl-D-alanyl-D-alanine + di-trans,octa-cis-undecaprenyl phosphate = di-trans,octa-cis-undecaprenyl diphospho-N-acetyl-alpha-D-muramoyl-L-alanyl-D-glutamyl-meso-2,6-diaminopimeloyl-D-alanyl-D-alanine + UMP. It functions in the pathway cell wall biogenesis; peptidoglycan biosynthesis. Functionally, catalyzes the initial step of the lipid cycle reactions in the biosynthesis of the cell wall peptidoglycan: transfers peptidoglycan precursor phospho-MurNAc-pentapeptide from UDP-MurNAc-pentapeptide onto the lipid carrier undecaprenyl phosphate, yielding undecaprenyl-pyrophosphoryl-MurNAc-pentapeptide, known as lipid I. The sequence is that of Phospho-N-acetylmuramoyl-pentapeptide-transferase from Pseudomonas fluorescens (strain SBW25).